The chain runs to 436 residues: UPF0597 protein YhaM (436 aa).

This sequence belongs to the UPF0597 family.

This is UPF0597 protein YhaM from Salmonella paratyphi A (strain ATCC 9150 / SARB42).